The primary structure comprises 251 residues: 5-oxoprolinase subunit A (251 aa).

This sequence belongs to the LamB/PxpA family. Forms a complex composed of PxpA, PxpB and PxpC.

It carries out the reaction 5-oxo-L-proline + ATP + 2 H2O = L-glutamate + ADP + phosphate + H(+). Catalyzes the cleavage of 5-oxoproline to form L-glutamate coupled to the hydrolysis of ATP to ADP and inorganic phosphate. The sequence is that of 5-oxoprolinase subunit A from Paracidovorax citrulli (strain AAC00-1) (Acidovorax citrulli).